A 377-amino-acid polypeptide reads, in one-letter code: Chaperone protein DnaJ (377 aa).

One can recognise a J domain in the interval aspartate 5 to glycine 70. The CR-type zinc-finger motif lies at glycine 137–asparagine 215. 8 residues coordinate Zn(2+): cysteine 150, cysteine 153, cysteine 167, cysteine 170, cysteine 189, cysteine 192, cysteine 203, and cysteine 206. CXXCXGXG motif repeat units lie at residues cysteine 150–glycine 157, cysteine 167–glycine 174, cysteine 189–glycine 196, and cysteine 203–glycine 210.

This sequence belongs to the DnaJ family. As to quaternary structure, homodimer. The cofactor is Zn(2+).

The protein localises to the cytoplasm. Functionally, participates actively in the response to hyperosmotic and heat shock by preventing the aggregation of stress-denatured proteins and by disaggregating proteins, also in an autonomous, DnaK-independent fashion. Unfolded proteins bind initially to DnaJ; upon interaction with the DnaJ-bound protein, DnaK hydrolyzes its bound ATP, resulting in the formation of a stable complex. GrpE releases ADP from DnaK; ATP binding to DnaK triggers the release of the substrate protein, thus completing the reaction cycle. Several rounds of ATP-dependent interactions between DnaJ, DnaK and GrpE are required for fully efficient folding. Also involved, together with DnaK and GrpE, in the DNA replication of plasmids through activation of initiation proteins. This Bordetella parapertussis (strain 12822 / ATCC BAA-587 / NCTC 13253) protein is Chaperone protein DnaJ.